Consider the following 428-residue polypeptide: 3-phosphoshikimate 1-carboxyvinyltransferase (428 aa).

3-phosphoshikimate-binding residues include Lys22, Ser23, and Arg27. Phosphoenolpyruvate is bound at residue Lys22. 2 residues coordinate phosphoenolpyruvate: Gly94 and Arg122. The 3-phosphoshikimate site is built by Ser169, Ser170, Gln171, Ser197, Asp315, and Lys342. Residue Gln171 coordinates phosphoenolpyruvate. Asp315 (proton acceptor) is an active-site residue. Phosphoenolpyruvate contacts are provided by Arg346, Arg389, and Lys414.

The protein belongs to the EPSP synthase family. In terms of assembly, monomer.

It is found in the cytoplasm. It catalyses the reaction 3-phosphoshikimate + phosphoenolpyruvate = 5-O-(1-carboxyvinyl)-3-phosphoshikimate + phosphate. The protein operates within metabolic intermediate biosynthesis; chorismate biosynthesis; chorismate from D-erythrose 4-phosphate and phosphoenolpyruvate: step 6/7. Functionally, catalyzes the transfer of the enolpyruvyl moiety of phosphoenolpyruvate (PEP) to the 5-hydroxyl of shikimate-3-phosphate (S3P) to produce enolpyruvyl shikimate-3-phosphate and inorganic phosphate. In Cellvibrio japonicus (strain Ueda107) (Pseudomonas fluorescens subsp. cellulosa), this protein is 3-phosphoshikimate 1-carboxyvinyltransferase.